Here is a 251-residue protein sequence, read N- to C-terminus: Spermatogenesis-associated protein 46 (251 aa).

Its subcellular location is the nucleus membrane. Functionally, plays a role in spermiogenesis and fertilization. The chain is Spermatogenesis-associated protein 46 (SPATA46) from Macaca fascicularis (Crab-eating macaque).